Consider the following 966-residue polypeptide: C4 phosphoenolpyruvate carboxylase (966 aa).

Serine 11 carries the post-translational modification Phosphoserine. Histidine 172 is an active-site residue. Positions 283, 450, and 597 each coordinate D-glucose 6-phosphate. The active site involves lysine 600. Residue arginine 635 participates in D-glucose 6-phosphate binding. Arginine 641 is an active-site residue. Residue arginine 641 coordinates L-aspartate. Residue threonine 665 participates in D-glucose 6-phosphate binding. Position 673 (glutamine 673) interacts with L-aspartate. D-glucose 6-phosphate contacts are provided by residues arginine 753 and arginine 767–isoleucine 769. L-aspartate contacts are provided by lysine 829, arginine 888, and asparagine 964.

Belongs to the PEPCase type 1 family. Homotetramer. The cofactor is Mg(2+). As to expression, expressed in mesophyll cells, but not in bundle-sheath, roots, stems and flowers.

Its subcellular location is the cytoplasm. The catalysed reaction is oxaloacetate + phosphate = phosphoenolpyruvate + hydrogencarbonate. The protein operates within photosynthesis; C4 acid pathway. 5 fold activation by the allosteric regulator glucose-6-phosphate. Low sensitivity to inhibition by L-malate and L-aspartate. Up-regulated by light-reversible phosphorylation. Its function is as follows. Forms oxaloacetate through the carboxylation of phosphoenolpyruvate (PEP). Catalyzes the first step of C4 photosynthesis. This is C4 phosphoenolpyruvate carboxylase from Flaveria trinervia (Clustered yellowtops).